Here is a 51-residue protein sequence, read N- to C-terminus: Large ribosomal subunit protein eL40 (51 aa).

Cysteine 17, cysteine 20, cysteine 31, and cysteine 34 together coordinate Zn(2+).

The protein belongs to the eukaryotic ribosomal protein eL40 family. Part of the 50S ribosomal subunit. It depends on Zn(2+) as a cofactor.

The chain is Large ribosomal subunit protein eL40 from Thermococcus kodakarensis (strain ATCC BAA-918 / JCM 12380 / KOD1) (Pyrococcus kodakaraensis (strain KOD1)).